Here is a 216-residue protein sequence, read N- to C-terminus: 3-isopropylmalate dehydratase small subunit (216 aa).

Belongs to the LeuD family. LeuD type 1 subfamily. In terms of assembly, heterodimer of LeuC and LeuD.

The enzyme catalyses (2R,3S)-3-isopropylmalate = (2S)-2-isopropylmalate. It participates in amino-acid biosynthesis; L-leucine biosynthesis; L-leucine from 3-methyl-2-oxobutanoate: step 2/4. Catalyzes the isomerization between 2-isopropylmalate and 3-isopropylmalate, via the formation of 2-isopropylmaleate. The chain is 3-isopropylmalate dehydratase small subunit from Cupriavidus pinatubonensis (strain JMP 134 / LMG 1197) (Cupriavidus necator (strain JMP 134)).